Consider the following 418-residue polypeptide: Mitochondrial distribution and morphology protein 10 (418 aa).

Belongs to the MDM10 family. As to quaternary structure, component of the ER-mitochondria encounter structure (ERMES) or MDM complex, composed of MMM1, MDM10, MDM12 and MDM34. Associates with the mitochondrial outer membrane sorting assembly machinery SAM(core) complex.

It is found in the mitochondrion outer membrane. Functionally, component of the ERMES/MDM complex, which serves as a molecular tether to connect the endoplasmic reticulum and mitochondria. Components of this complex are involved in the control of mitochondrial shape and protein biogenesis and may function in phospholipid exchange. MDM10 is involved in the late assembly steps of the general translocase of the mitochondrial outer membrane (TOM complex). Functions in the TOM40-specific route of the assembly of outer membrane beta-barrel proteins, including the association of TOM40 with the receptor TOM22 and small TOM proteins. Can associate with the SAM(core) complex as well as the MDM12-MMM1 complex, both involved in late steps of the major beta-barrel assembly pathway, that is responsible for biogenesis of all outer membrane beta-barrel proteins. May act as a switch that shuttles between both complexes and channels precursor proteins into the TOM40-specific pathway. Plays a role in mitochondrial morphology and in the inheritance of mitochondria. In Meyerozyma guilliermondii (strain ATCC 6260 / CBS 566 / DSM 6381 / JCM 1539 / NBRC 10279 / NRRL Y-324) (Yeast), this protein is Mitochondrial distribution and morphology protein 10.